A 420-amino-acid chain; its full sequence is UDP-N-acetylglucosamine 1-carboxyvinyltransferase (420 aa).

Residue Lys22–Asn23 coordinates phosphoenolpyruvate. Arg92 is a UDP-N-acetyl-alpha-D-glucosamine binding site. The active-site Proton donor is Cys116. The residue at position 116 (Cys116) is a 2-(S-cysteinyl)pyruvic acid O-phosphothioketal. UDP-N-acetyl-alpha-D-glucosamine is bound by residues Arg121–Gln125, Asp304, and Ile326.

The protein belongs to the EPSP synthase family. MurA subfamily.

The protein resides in the cytoplasm. The catalysed reaction is phosphoenolpyruvate + UDP-N-acetyl-alpha-D-glucosamine = UDP-N-acetyl-3-O-(1-carboxyvinyl)-alpha-D-glucosamine + phosphate. It participates in cell wall biogenesis; peptidoglycan biosynthesis. Functionally, cell wall formation. Adds enolpyruvyl to UDP-N-acetylglucosamine. The protein is UDP-N-acetylglucosamine 1-carboxyvinyltransferase of Paraburkholderia xenovorans (strain LB400).